A 375-amino-acid chain; its full sequence is Lipid-A-disaccharide synthase (375 aa).

This sequence belongs to the LpxB family.

It carries out the reaction a lipid X + a UDP-2-N,3-O-bis[(3R)-3-hydroxyacyl]-alpha-D-glucosamine = a lipid A disaccharide + UDP + H(+). It functions in the pathway bacterial outer membrane biogenesis; LPS lipid A biosynthesis. Its function is as follows. Condensation of UDP-2,3-diacylglucosamine and 2,3-diacylglucosamine-1-phosphate to form lipid A disaccharide, a precursor of lipid A, a phosphorylated glycolipid that anchors the lipopolysaccharide to the outer membrane of the cell. This chain is Lipid-A-disaccharide synthase, found in Pseudomonas putida (strain ATCC 700007 / DSM 6899 / JCM 31910 / BCRC 17059 / LMG 24140 / F1).